The sequence spans 836 residues: MWLLALCLVGLAGAQRGGGGPGGGAPGGPGLGLGSLGEERFPVVNTAYGRVRGVRRELNNEILGPVVQFLGVPYATPPLGARRFQPPEAPASWPGVRNATTLPPACPQNLHGALPAIMLPVWFTDNLEAAATYVQNQSEDCLYLNLYVPTEDGPLTKKRDEATLNPPDTDIRDSGKKPVMLFLHGGSYMEGTGNMFDGSVLAAYGNVIVVTLNYRLGVLGFLSTGDQAAKGNYGLLDQIQALRWLSENIAHFGGDPERITIFGSGAGASCVNLLILSHHSEGLFQKAIAQSGTAISSWSVNYQPLKYTRLLAAKVGCDREDSTEAVECLRRKSSRELVDQDVQPARYHIAFGPVVDGDVVPDDPEILMQQGEFLNYDMLIGVNQGEGLKFVEDSAESEDGVSASAFDFTVSNFVDNLYGYPEGKDVLRETIKFMYTDWADRDNGEMRRKTLLALFTDHQWVAPAVATAKLHADYQSPVYFYTFYHHCQAEGRPEWADAAHGDELPYVFGVPMVGATDLFPCNFSKNDVMLSAVVMTYWTNFAKTGDPNQPVPQDTKFIHTKPNRFEEVVWSKFNSKEKQYLHIGLKPRVRDNYRANKVAFWLELVPHLHNLHTELFTTTTRLPPYATRWPPRTPGPGTSGTRRPPPPATLPPESDIDLGPRAYDRFPGDSRDYSTELSVTVAVGASLLFLNILAFAALYYKRDRRQELRCRRLSPPGGSGSGVPGGGPLLPTAGRELPPEEELVSLQLKRGGGVGADPAEALRPACPPDYTLALRRAPDDVPLLAPGALTLLPSGLGPPPPPPPPSLHPFGPFPPPPPTATSHNNTLPHPHSTTRV.

Positions 1-14 (MWLLALCLVGLAGA) are cleaved as a signal peptide. Residues 15–678 (QRGGGGPGGG…DSRDYSTELS (664 aa)) are Extracellular-facing. 2 N-linked (GlcNAc...) asparagine glycosylation sites follow: Asn98 and Asn136. 3 cysteine pairs are disulfide-bonded: Cys106–Cys141, Cys317–Cys328, and Cys487–Cys521. N-linked (GlcNAc...) asparagine glycosylation is present at Asn522. Residues 623-661 (PPYATRWPPRTPGPGTSGTRRPPPPATLPPESDIDLGPR) form a disordered region. The helical transmembrane segment at 679–699 (VTVAVGASLLFLNILAFAALY) threads the bilayer. Residues 679–699 (VTVAVGASLLFLNILAFAALY) form a required for interaction with LHFPL4 region. The Cytoplasmic portion of the chain corresponds to 700–836 (YKRDRRQELR…LPHPHSTTRV (137 aa)). Disordered stretches follow at residues 711-735 (RRLS…TAGR) and 791-836 (LLPS…TTRV). Phosphoserine occurs at positions 714 and 719. Residues 717–728 (GGSGSGVPGGGP) are compositionally biased toward gly residues. A compositionally biased stretch (pro residues) spans 796–819 (LGPPPPPPPPSLHPFGPFPPPPPT). Polar residues predominate over residues 824-836 (NNTLPHPHSTTRV).

Belongs to the type-B carboxylesterase/lipase family. In terms of assembly, interacts with neurexins NRXN1, NRXN2 and NRXN3. Interaction with neurexins is mediated by heparan sulfate glycan modification on neurexin. Interacts (via its C-terminus) with DLG4/PSD-95 (via PDZ domain 3). Interacts with PATJ. Interacts with MDGA2. Interacts with GPHN. Interacts with MDGA1. Found in a complex with MAGI2 and IGSF9B, where it interacts with MAGI2 (via WW 1, WW 2 and PDZ 2 domains). Identified in a complex of 720 kDa composed of LHFPL4, NLGN2, GABRA1, GABRB2, GABRG2 and GABRB3. Interacts with LHFPL4; leading to mutual regulation of the protein level and synaptic clustering. Interacts with GABRA1. In terms of tissue distribution, brain and arteries. Detected in the retina outer plexiform layer (at protein level). Widely expressed. Detected in heart, brain, spleen, lung, liver, skeletal muscle, kidney and testis.

The protein localises to the cell membrane. It is found in the postsynaptic cell membrane. The protein resides in the presynaptic cell membrane. Functionally, transmembrane scaffolding protein involved in cell-cell interactions via its interactions with neurexin family members. Mediates cell-cell interactions both in neurons and in other types of cells, such as Langerhans beta cells. Mediates cell-cell interactions between Langerhans beta cells and modulates insulin secretion. Plays a role in synapse function and synaptic signal transmission, especially via gamma-aminobutyric acid receptors (GABA(A) receptors). Functions by recruiting and clustering synaptic proteins. Promotes clustering of postsynaptic GABRG2 and GPHN. Promotes clustering of postsynaptic LHFPL4. Modulates signaling by inhibitory synapses, and thereby plays a role in controlling the ratio of signaling by excitatory and inhibitory synapses and information processing. Required for normal signal amplitude from inhibitory synapses, but is not essential for normal signal frequency. May promote the initial formation of synapses, but is not essential for this. In vitro, triggers the de novo formation of presynaptic structures. The polypeptide is Neuroligin-2 (Nlgn2) (Mus musculus (Mouse)).